The chain runs to 685 residues: DNA ligase (685 aa).

NAD(+) contacts are provided by residues 39–43, 88–89, and E119; these read DGEYD and SL. Residue K121 is the N6-AMP-lysine intermediate of the active site. 4 residues coordinate NAD(+): R142, E182, K302, and K326. Residues C420, C423, C438, and C443 each coordinate Zn(2+). Residues 606–685 enclose the BRCT domain; the sequence is DNATFFSEKR…QTFLEHLDRG (80 aa).

The protein belongs to the NAD-dependent DNA ligase family. LigA subfamily. Mg(2+) serves as cofactor. The cofactor is Mn(2+).

It carries out the reaction NAD(+) + (deoxyribonucleotide)n-3'-hydroxyl + 5'-phospho-(deoxyribonucleotide)m = (deoxyribonucleotide)n+m + AMP + beta-nicotinamide D-nucleotide.. Its function is as follows. DNA ligase that catalyzes the formation of phosphodiester linkages between 5'-phosphoryl and 3'-hydroxyl groups in double-stranded DNA using NAD as a coenzyme and as the energy source for the reaction. It is essential for DNA replication and repair of damaged DNA. The sequence is that of DNA ligase from Desulforapulum autotrophicum (strain ATCC 43914 / DSM 3382 / VKM B-1955 / HRM2) (Desulfobacterium autotrophicum).